Reading from the N-terminus, the 23-residue chain is GLWQLIKDKFKDAATGFVTGIQS.

Expressed by the skin dorsal glands.

Its subcellular location is the secreted. Has no antimicrobial activity. This chain is Dahlein-4.3, found in Ranoidea dahlii (Dahl's aquatic frog).